Reading from the N-terminus, the 527-residue chain is Tyrosine-protein kinase TXK (527 aa).

The interval 58 to 81 (TQSNRGGVQPSKRKPLPPLPQEPP) is disordered. The region spanning 82 to 142 (DERIQVKALY…PSNYVTENRL (61 aa)) is the SH3 domain. Y91 carries the post-translational modification Phosphotyrosine; by autocatalysis. The SH2 domain occupies 150 to 246 (WYHKNITRNQ…GLISRLRYPI (97 aa)). In terms of domain architecture, Protein kinase spans 271-527 (LAFVKEIGSG…QVLTEIAETW (257 aa)). Residues 277–285 (IGSGQFGVV) and K299 each bind ATP. The Proton acceptor role is filled by D390. At Y420 the chain carries Phosphotyrosine; by FYN and autocatalysis.

The protein belongs to the protein kinase superfamily. Tyr protein kinase family. TEC subfamily. Interacts with PARP1 and EEF1A1. Interacts with SH2D2A. Interacts with FYN. Post-translationally, phosphorylated at Tyr-420 by FYN. Autophosphorylation at Tyr-91 is critical for the activation of TXK, leading to the up-regulation of IFN-gamma gene transcription. In terms of processing, the cysteine string at the N-terminus is palmitoylated and required for the proper subcellular location. As to expression, expressed in early thymocytes, T-cells and mast cells.

It localises to the cytoplasm. Its subcellular location is the nucleus. The protein resides in the cell membrane. The enzyme catalyses L-tyrosyl-[protein] + ATP = O-phospho-L-tyrosyl-[protein] + ADP + H(+). With respect to regulation, activated by phosphorylation by FYN. Non-receptor tyrosine kinase that plays a redundant role with ITK in regulation of the adaptive immune response. Regulates the development, function and differentiation of conventional T-cells and nonconventional NKT-cells. When antigen presenting cells (APC) activate T-cell receptor (TCR), a series of phosphorylation leads to the recruitment of TXK to the cell membrane, where it is phosphorylated at Tyr-420. Phosphorylation leads to TXK full activation. Also contributes to signaling from many receptors and participates in multiple downstream pathways, including regulation of the actin cytoskeleton. Like ITK, can phosphorylate PLCG1, leading to its localization in lipid rafts and activation, followed by subsequent cleavage of its substrates. In turn, the endoplasmic reticulum releases calcium in the cytoplasm and the nuclear activator of activated T-cells (NFAT) translocates into the nucleus to perform its transcriptional duty. Plays a role in the positive regulation of IFNG transcription in T-helper 1 cells as part of an IFNG promoter-binding complex with PARP1 and EEF1A1. Within the complex, phosphorylates both PARP1 and EEF1A1. Also phosphorylates key sites in LCP2 leading to the up-regulation of Th1 preferred cytokine IL-2. Phosphorylates 'Tyr-201' of CTLA4 which leads to the association of PI-3 kinase with the CTLA4 receptor. The polypeptide is Tyrosine-protein kinase TXK (Txk) (Mus musculus (Mouse)).